A 215-amino-acid polypeptide reads, in one-letter code: ATP-dependent dethiobiotin synthetase BioD (215 aa).

13–18 is a binding site for ATP; that stretch reads DIGKTV. A Mg(2+)-binding site is contributed by Thr-17. Residue Lys-38 is part of the active site. Thr-42 contributes to the substrate binding site. ATP-binding positions include Asp-50, 115-118, and 175-176; these read EGAG and NH. Asp-50 and Glu-115 together coordinate Mg(2+).

This sequence belongs to the dethiobiotin synthetase family. Homodimer. Mg(2+) is required as a cofactor.

The protein localises to the cytoplasm. It catalyses the reaction (7R,8S)-7,8-diammoniononanoate + CO2 + ATP = (4R,5S)-dethiobiotin + ADP + phosphate + 3 H(+). It functions in the pathway cofactor biosynthesis; biotin biosynthesis; biotin from 7,8-diaminononanoate: step 1/2. Its function is as follows. Catalyzes a mechanistically unusual reaction, the ATP-dependent insertion of CO2 between the N7 and N8 nitrogen atoms of 7,8-diaminopelargonic acid (DAPA, also called 7,8-diammoniononanoate) to form a ureido ring. The protein is ATP-dependent dethiobiotin synthetase BioD of Neisseria meningitidis serogroup B (strain ATCC BAA-335 / MC58).